We begin with the raw amino-acid sequence, 265 residues long: Eukaryotic translation initiation factor 3 subunit J (265 aa).

Positions 1–71 are disordered; sequence MSWDDEAING…KESSADRALL (71 aa). A compositionally biased stretch (acidic residues) spans 23–32; that stretch reads WDAEIGDDEP. The span at 42-71 shows a compositional bias: basic and acidic residues; it reads EEKKPAPKPKKEQPKKVKKGKESSADRALL. Ser65 carries the phosphoserine modification. Thr75 carries the post-translational modification Phosphothreonine. Residue Ser92 is modified to Phosphoserine. Positions 219-265 are disordered; that stretch reads VRGGTATGGAGKKKVKGKTNLGGAFKKDQDFDLDGPDDFEFGDDDFM. Omega-N-methylarginine is present on Arg220. A compositionally biased stretch (acidic residues) spans 249–265; the sequence is FDLDGPDDFEFGDDDFM.

It belongs to the eIF-3 subunit J family. Probable component of the eukaryotic translation initiation factor 3 (eIF-3) complex. Is not part of the eIF-3 core complex, with which it is associated in substochiometric amounts.

Its subcellular location is the cytoplasm. Functionally, component of the eukaryotic translation initiation factor 3 (eIF-3) complex, which is involved in protein synthesis of a specialized repertoire of mRNAs and, together with other initiation factors, stimulates binding of mRNA and methionyl-tRNAi to the 40S ribosome. The eIF-3 complex specifically targets and initiates translation of a subset of mRNAs involved in cell proliferation. The sequence is that of Eukaryotic translation initiation factor 3 subunit J from Saccharomyces cerevisiae (strain ATCC 204508 / S288c) (Baker's yeast).